The primary structure comprises 213 residues: Isopentenyl-diphosphate Delta-isomerase (213 aa).

Residues 1–10 are compositionally biased toward basic and acidic residues; that stretch reads MRDSMSEADR. Residues 1–34 form a disordered region; it reads MRDSMSEADRSSPGSGKTDREDETAENATQDVIA. Residues His-51, His-58, and His-95 each coordinate Mn(2+). Residues 56–193 form the Nudix hydrolase domain; it reads VRHRAFTCLL…RQLRLCPWFE (138 aa). Glu-113 is a binding site for Mg(2+). Mn(2+) is bound by residues Glu-142 and Glu-144. Glu-144 is an active-site residue.

The protein belongs to the IPP isomerase type 1 family. It depends on Mg(2+) as a cofactor. Mn(2+) serves as cofactor.

It is found in the cytoplasm. The catalysed reaction is isopentenyl diphosphate = dimethylallyl diphosphate. It functions in the pathway isoprenoid biosynthesis; dimethylallyl diphosphate biosynthesis; dimethylallyl diphosphate from isopentenyl diphosphate: step 1/1. Functionally, catalyzes the 1,3-allylic rearrangement of the homoallylic substrate isopentenyl (IPP) to its highly electrophilic allylic isomer, dimethylallyl diphosphate (DMAPP). The chain is Isopentenyl-diphosphate Delta-isomerase from Halobacterium salinarum (strain ATCC 700922 / JCM 11081 / NRC-1) (Halobacterium halobium).